A 141-amino-acid polypeptide reads, in one-letter code: Putative pre-16S rRNA nuclease (141 aa).

It belongs to the YqgF nuclease family.

It is found in the cytoplasm. Could be a nuclease involved in processing of the 5'-end of pre-16S rRNA. In Cupriavidus pinatubonensis (strain JMP 134 / LMG 1197) (Cupriavidus necator (strain JMP 134)), this protein is Putative pre-16S rRNA nuclease.